A 400-amino-acid polypeptide reads, in one-letter code: Queuine tRNA-ribosyltransferase (400 aa).

The active-site Proton acceptor is the Asp93. Residues 93–97 (DSGGF), Asp147, Gln190, and Gly217 each bind substrate. The RNA binding stretch occupies residues 248-254 (GVGSPED). Catalysis depends on Asp267, which acts as the Nucleophile. The RNA binding; important for wobble base 34 recognition stretch occupies residues 272-276 (TRIAR). Residues Cys305, Cys307, Cys310, and His336 each coordinate Zn(2+). The segment at 375 to 400 (RRERARAAGGAGHAPGPAEPLLPENR) is disordered. Positions 388–400 (APGPAEPLLPENR) are enriched in low complexity.

This sequence belongs to the queuine tRNA-ribosyltransferase family. Homodimer. Within each dimer, one monomer is responsible for RNA recognition and catalysis, while the other monomer binds to the replacement base PreQ1. The cofactor is Zn(2+).

The enzyme catalyses 7-aminomethyl-7-carbaguanine + guanosine(34) in tRNA = 7-aminomethyl-7-carbaguanosine(34) in tRNA + guanine. The protein operates within tRNA modification; tRNA-queuosine biosynthesis. Its function is as follows. Catalyzes the base-exchange of a guanine (G) residue with the queuine precursor 7-aminomethyl-7-deazaguanine (PreQ1) at position 34 (anticodon wobble position) in tRNAs with GU(N) anticodons (tRNA-Asp, -Asn, -His and -Tyr). Catalysis occurs through a double-displacement mechanism. The nucleophile active site attacks the C1' of nucleotide 34 to detach the guanine base from the RNA, forming a covalent enzyme-RNA intermediate. The proton acceptor active site deprotonates the incoming PreQ1, allowing a nucleophilic attack on the C1' of the ribose to form the product. After dissociation, two additional enzymatic reactions on the tRNA convert PreQ1 to queuine (Q), resulting in the hypermodified nucleoside queuosine (7-(((4,5-cis-dihydroxy-2-cyclopenten-1-yl)amino)methyl)-7-deazaguanosine). This is Queuine tRNA-ribosyltransferase from Symbiobacterium thermophilum (strain DSM 24528 / JCM 14929 / IAM 14863 / T).